The sequence spans 424 residues: Serine hydroxymethyltransferase 2 (424 aa).

Residues Leu-125 and 129-131 (GHL) each bind (6S)-5,6,7,8-tetrahydrofolate. Lys-234 is modified (N6-(pyridoxal phosphate)lysine). Residue Glu-250 coordinates (6S)-5,6,7,8-tetrahydrofolate.

It belongs to the SHMT family. In terms of assembly, homodimer. It depends on pyridoxal 5'-phosphate as a cofactor.

It is found in the cytoplasm. It carries out the reaction (6R)-5,10-methylene-5,6,7,8-tetrahydrofolate + glycine + H2O = (6S)-5,6,7,8-tetrahydrofolate + L-serine. The protein operates within one-carbon metabolism; tetrahydrofolate interconversion. Its pathway is amino-acid biosynthesis; glycine biosynthesis; glycine from L-serine: step 1/1. Functionally, catalyzes the reversible interconversion of serine and glycine with tetrahydrofolate (THF) serving as the one-carbon carrier. This reaction serves as the major source of one-carbon groups required for the biosynthesis of purines, thymidylate, methionine, and other important biomolecules. Also exhibits THF-independent aldolase activity toward beta-hydroxyamino acids, producing glycine and aldehydes, via a retro-aldol mechanism. This chain is Serine hydroxymethyltransferase 2, found in Burkholderia pseudomallei (strain 1710b).